Consider the following 292-residue polypeptide: ATP synthase gamma chain (292 aa).

It belongs to the ATPase gamma chain family. In terms of assembly, F-type ATPases have 2 components, CF(1) - the catalytic core - and CF(0) - the membrane proton channel. CF(1) has five subunits: alpha(3), beta(3), gamma(1), delta(1), epsilon(1). CF(0) has three main subunits: a, b and c.

Its subcellular location is the cell membrane. Produces ATP from ADP in the presence of a proton gradient across the membrane. The gamma chain is believed to be important in regulating ATPase activity and the flow of protons through the CF(0) complex. The protein is ATP synthase gamma chain of Streptococcus pneumoniae (strain JJA).